Reading from the N-terminus, the 186-residue chain is Peptidyl-tRNA hydrolase (186 aa).

Tyr-16 serves as a coordination point for tRNA. Catalysis depends on His-21, which acts as the Proton acceptor. Positions 60 and 62 each coordinate tRNA.

This sequence belongs to the PTH family. Monomer.

It is found in the cytoplasm. The enzyme catalyses an N-acyl-L-alpha-aminoacyl-tRNA + H2O = an N-acyl-L-amino acid + a tRNA + H(+). Its function is as follows. Hydrolyzes ribosome-free peptidyl-tRNAs (with 1 or more amino acids incorporated), which drop off the ribosome during protein synthesis, or as a result of ribosome stalling. In terms of biological role, catalyzes the release of premature peptidyl moieties from peptidyl-tRNA molecules trapped in stalled 50S ribosomal subunits, and thus maintains levels of free tRNAs and 50S ribosomes. The polypeptide is Peptidyl-tRNA hydrolase (Tropheryma whipplei (strain Twist) (Whipple's bacillus)).